Reading from the N-terminus, the 220-residue chain is Iron-sulfur flavoprotein AF_1436 (220 aa).

Residues cysteine 47, cysteine 50, cysteine 53, and cysteine 59 each contribute to the [4Fe-4S] cluster site.

It belongs to the SsuE family. Isf subfamily. Homodimer. It depends on FMN as a cofactor. The cofactor is [4Fe-4S] cluster.

In terms of biological role, redox-active protein probably involved in electron transport. The protein is Iron-sulfur flavoprotein AF_1436 of Archaeoglobus fulgidus (strain ATCC 49558 / DSM 4304 / JCM 9628 / NBRC 100126 / VC-16).